A 122-amino-acid polypeptide reads, in one-letter code: uncharacterized protein (122 aa).

It to B.subtilis YpdA.

This is an uncharacterized protein from Bacillus licheniformis.